The sequence spans 416 residues: E3 ubiquitin-protein ligase RNFT1 (416 aa).

Disordered stretches follow at residues 1–50 and 68–117; these read MKHR…MSLP and DLSS…DSRE. Over residues 7–19 the composition is skewed to basic and acidic residues; it reads HERQSSTESKNLK. Composition is skewed to polar residues over residues 20–45 and 68–80; these read ETTQ…SPSA and DLSS…VARS. Basic residues predominate over residues 81–100; sequence NSRRVRPSTHGRSPSRHGHT. A run of 6 helical transmembrane segments spans residues 146–166, 184–204, 214–234, 237–257, 265–287, and 302–322; these read LVVQ…TFLY, LQCL…YYTF, VFMN…VVGI, FIGK…PSFV, YWYM…PVWF, and WHFG…IIFG. The segment at 349–400 is required for ubiquitin ligase activity and for protection against ER stress-induced cell death; sequence CSEADGMCAICQAEFTKPIALICQHVFCEECISSWFNKEKTCPLCRTLISNH. The RING-type zinc-finger motif lies at 356 to 394; the sequence is CAICQAEFTKPIALICQHVFCEECISSWFNKEKTCPLCR.

The protein localises to the endoplasmic reticulum membrane. The catalysed reaction is S-ubiquitinyl-[E2 ubiquitin-conjugating enzyme]-L-cysteine + [acceptor protein]-L-lysine = [E2 ubiquitin-conjugating enzyme]-L-cysteine + N(6)-ubiquitinyl-[acceptor protein]-L-lysine.. It participates in protein modification; protein ubiquitination. E3 ubiquitin-protein ligase that acts in the endoplasmic reticulum (ER)-associated degradation (ERAD) pathway, which targets misfolded proteins that accumulate in the endoplasmic reticulum (ER) for ubiquitination and subsequent proteasome-mediated degradation. Protects cells from ER stress-induced apoptosis. In Xenopus laevis (African clawed frog), this protein is E3 ubiquitin-protein ligase RNFT1 (rnft1).